The primary structure comprises 78 residues: Transmembrane protein 258 (78 aa).

Over 1-18 (MDVMQRYVSPVNPAVFPH) the chain is Cytoplasmic. A helical membrane pass occupies residues 19-39 (LATVLLVIGTFFTAWFFIFVV). The Cytoplasmic segment spans residues 40-53 (SRKSSKESTLIKEL). Residues 54 to 74 (LISLCASIFLGFGIVFLLLTV) traverse the membrane as a helical segment. Residues 75–78 (GIYV) are Perinuclear space-facing.

This sequence belongs to the OST5 family. As to quaternary structure, homodimer. Component of the oligosaccharyltransferase (OST) complex. Interacts with klar and Msp300, components of LINC complex.

The protein localises to the nucleus outer membrane. Its subcellular location is the cytoplasm. It localises to the endoplasmic reticulum membrane. Subunit of the oligosaccharyl transferase (OST) complex that catalyzes the initial transfer of a defined glycan (Glc(3)Man(9)GlcNAc(2) in eukaryotes) from the lipid carrier dolichol-pyrophosphate to an asparagine residue within an Asn-X-Ser/Thr consensus motif in nascent polypeptide chains, the first step in protein N-glycosylation. N-glycosylation occurs cotranslationally and the complex associates with the Sec61 complex at the channel-forming translocon complex that mediates protein translocation across the endoplasmic reticulum (ER). All subunits are required for a maximal enzyme activity. In addition may regulates nuclear envelope (NE) architecture and nuclear positioning through the linker of nucleoskeleton and cytoskeleton (LINC)-dependent and -independent mechanisms. This is Transmembrane protein 258 from Drosophila melanogaster (Fruit fly).